A 230-amino-acid chain; its full sequence is Iron-dependent repressor IdeR (230 aa).

The region spanning 4–65 (LVDTTEMYLR…VAGNRHLELT (62 aa)) is the HTH dtxR-type domain.

It belongs to the DtxR/MntR family. As to quaternary structure, homodimer.

It is found in the cytoplasm. Its function is as follows. Metal-dependent DNA-binding protein that controls transcription of many genes involved in iron metabolism. This is Iron-dependent repressor IdeR (ideR) from Mycobacterium leprae (strain TN).